Consider the following 283-residue polypeptide: Release factor glutamine methyltransferase (283 aa).

S-adenosyl-L-methionine contacts are provided by Asp-143 and Asn-189. Residue Asn-189–Tyr-192 coordinates substrate.

This sequence belongs to the protein N5-glutamine methyltransferase family. PrmC subfamily.

The enzyme catalyses L-glutaminyl-[peptide chain release factor] + S-adenosyl-L-methionine = N(5)-methyl-L-glutaminyl-[peptide chain release factor] + S-adenosyl-L-homocysteine + H(+). Its function is as follows. Methylates the class 1 translation termination release factors RF1/PrfA and RF2/PrfB on the glutamine residue of the universally conserved GGQ motif. In Clostridium botulinum (strain Hall / ATCC 3502 / NCTC 13319 / Type A), this protein is Release factor glutamine methyltransferase.